Here is a 370-residue protein sequence, read N- to C-terminus: Protein maelstrom 2 (370 aa).

Positions 2-68 form a DNA-binding region, HMG box; the sequence is AQNKPNAFMA…VLERESKTER (67 aa).

This sequence belongs to the maelstrom family.

The protein localises to the cytoplasm. It is found in the nucleus. Its function is as follows. Involved both in the piRNA and miRNA metabolic processes. As a component of the meiotic nuage, plays a central role during oogenesis by repressing transposable elements and preventing their mobilization, which is essential for the germline integrity. Repression of transposable elements is mediated via the piRNA metabolic process, which mediates the repression of transposable elements during meiosis by forming complexes composed of piRNAs and Piwi proteins and governs the repression of transposons. As a nuclear component, it is required for proper differentiation in the germline stem cell (GSC) lineage by repressing microRNA-7 (miR-7), thereby acting as an indirect regulator of bag-of-marbles (Bam). Acts by binding to the promoter of miR-7 gene and repressing its expression; miR-7 repression alleviates the Bam repression by miR-7, thereby allowing differentiation in the germline stem cell (GSC) lineage. In Drosophila pseudoobscura pseudoobscura (Fruit fly), this protein is Protein maelstrom 2 (mael2).